The primary structure comprises 515 residues: Sterol 14-alpha demethylase cyp51A (515 aa).

A helical transmembrane segment spans residues 7 to 29 (LTAYMAVAVLTAILLNVVYQLFF). Asn-33 and Asn-269 each carry an N-linked (GlcNAc...) asparagine glycan. Cys-454 contributes to the heme binding site. N-linked (GlcNAc...) asparagine glycosylation is present at Asn-512.

Belongs to the cytochrome P450 family. It depends on heme as a cofactor.

Its subcellular location is the endoplasmic reticulum membrane. The enzyme catalyses a 14alpha-methyl steroid + 3 reduced [NADPH--hemoprotein reductase] + 3 O2 = a Delta(14) steroid + formate + 3 oxidized [NADPH--hemoprotein reductase] + 4 H2O + 4 H(+). It carries out the reaction a 14alpha-methyl steroid + reduced [NADPH--hemoprotein reductase] + O2 = a 14alpha-hydroxymethyl steroid + oxidized [NADPH--hemoprotein reductase] + H2O + H(+). It catalyses the reaction a 14alpha-hydroxymethyl steroid + reduced [NADPH--hemoprotein reductase] + O2 = a 14alpha-formyl steroid + oxidized [NADPH--hemoprotein reductase] + 2 H2O + H(+). The catalysed reaction is a 14alpha-formyl steroid + reduced [NADPH--hemoprotein reductase] + O2 = a Delta(14) steroid + formate + oxidized [NADPH--hemoprotein reductase] + H2O + 2 H(+). The enzyme catalyses lanosterol + 3 reduced [NADPH--hemoprotein reductase] + 3 O2 = 4,4-dimethyl-5alpha-cholesta-8,14,24-trien-3beta-ol + formate + 3 oxidized [NADPH--hemoprotein reductase] + 4 H2O + 4 H(+). It carries out the reaction lanosterol + reduced [NADPH--hemoprotein reductase] + O2 = 32-hydroxylanosterol + oxidized [NADPH--hemoprotein reductase] + H2O + H(+). It catalyses the reaction 32-hydroxylanosterol + reduced [NADPH--hemoprotein reductase] + O2 = 32-oxolanosterol + oxidized [NADPH--hemoprotein reductase] + 2 H2O + H(+). The catalysed reaction is 32-oxolanosterol + reduced [NADPH--hemoprotein reductase] + O2 = 4,4-dimethyl-5alpha-cholesta-8,14,24-trien-3beta-ol + formate + oxidized [NADPH--hemoprotein reductase] + H2O + 2 H(+). The enzyme catalyses eburicol + 3 reduced [NADPH--hemoprotein reductase] + 3 O2 = 14-demethyleburicol + formate + 3 oxidized [NADPH--hemoprotein reductase] + 4 H2O + 4 H(+). It carries out the reaction eburicol + reduced [NADPH--hemoprotein reductase] + O2 = 32-hydroxyeburicol + oxidized [NADPH--hemoprotein reductase] + H2O + H(+). It catalyses the reaction 32-hydroxyeburicol + reduced [NADPH--hemoprotein reductase] + O2 = 32-oxoeburicol + oxidized [NADPH--hemoprotein reductase] + 2 H2O + H(+). The catalysed reaction is 32-oxoeburicol + reduced [NADPH--hemoprotein reductase] + O2 = 14-demethyleburicol + formate + oxidized [NADPH--hemoprotein reductase] + H2O + 2 H(+). It functions in the pathway steroid metabolism; ergosterol biosynthesis. The sterol 14-alpha demethylase activity is inhibited by azole compounds. Activity is inhibited by the novel and long-acting fungicidal azole, PC1244. Functionally, sterol 14alpha-demethylase, encoded by cyp51A and cyp51B, that plays a critical role in the third module of ergosterol biosynthesis pathway, being ergosterol the major sterol component in fungal membranes that participates in a variety of functions. The third module or late pathway involves the ergosterol synthesis itself through consecutive reactions that mainly occur in the endoplasmic reticulum (ER) membrane. In filamentous fungi, during the initial step of this module, lanosterol (lanosta-8,24-dien-3beta-ol) can be metabolized to eburicol. Sterol 14alpha-demethylase catalyzes the three-step oxidative removal of the 14alpha-methyl group (C-32) of both these sterols in the form of formate, and converts eburicol and lanosterol to 14-demethyleburicol (4,4,24-trimethylergosta-8,14,24(28)-trienol) and 4,4-dimethyl-5alpha-cholesta-8,14,24-trien-3beta-ol, respectively, which are further metabolized by other enzymes in the pathway to ergosterol. Can also use substrates not intrinsic to fungi, such as 24,25-dihydrolanosterol (DHL), producing 4,4'-dimethyl-8,14-cholestadien-3-beta-ol, but at lower rates than the endogenous substrates. Its function is as follows. As a target of azole drugs, plays a crucial role in azole susceptibility. This is Sterol 14-alpha demethylase cyp51A from Aspergillus fumigatus (strain ATCC MYA-4609 / CBS 101355 / FGSC A1100 / Af293) (Neosartorya fumigata).